The chain runs to 733 residues: 1,4-alpha-glucan branching enzyme GlgB (733 aa).

The active-site Nucleophile is the aspartate 412. Glutamate 467 serves as the catalytic Proton donor.

The protein belongs to the glycosyl hydrolase 13 family. GlgB subfamily. In terms of assembly, monomer.

It carries out the reaction Transfers a segment of a (1-&gt;4)-alpha-D-glucan chain to a primary hydroxy group in a similar glucan chain.. Its pathway is glycan biosynthesis; glycogen biosynthesis. In terms of biological role, catalyzes the formation of the alpha-1,6-glucosidic linkages in glycogen by scission of a 1,4-alpha-linked oligosaccharide from growing alpha-1,4-glucan chains and the subsequent attachment of the oligosaccharide to the alpha-1,6 position. The protein is 1,4-alpha-glucan branching enzyme GlgB of Burkholderia vietnamiensis (strain G4 / LMG 22486) (Burkholderia cepacia (strain R1808)).